Consider the following 251-residue polypeptide: Flap endonuclease Xni (251 aa).

Mg(2+) is bound at residue Asp-104. A 5'-3' exonuclease domain is found at 160–250 (VLPRQLPDYW…SGNLQQLRLK (91 aa)). The K(+) site is built by Leu-171, Ala-172, Pro-180, Val-182, and Val-185. The segment at 184 to 189 (GVGAKT) is interaction with DNA.

Belongs to the Xni family. It depends on Mg(2+) as a cofactor. K(+) is required as a cofactor.

Functionally, has flap endonuclease activity. During DNA replication, flap endonucleases cleave the 5'-overhanging flap structure that is generated by displacement synthesis when DNA polymerase encounters the 5'-end of a downstream Okazaki fragment. This Yersinia pestis bv. Antiqua (strain Nepal516) protein is Flap endonuclease Xni.